A 365-amino-acid polypeptide reads, in one-letter code: Probable caffeine synthase 5 (365 aa).

Tyr18 is a binding site for S-adenosyl-L-homocysteine. Residue Thr25 participates in caffeine binding. S-adenosyl-L-homocysteine contacts are provided by Cys61, Asn66, Asp98, Leu99, Ser134, and Phe135. Tyr152, His155, and Trp156 together coordinate caffeine. Mg(2+) is bound by residues Asn173, Asp259, Phe261, and Asn262. Residue Phe317 participates in caffeine binding.

Belongs to the methyltransferase superfamily. Type-7 methyltransferase family. Mg(2+) serves as cofactor.

It participates in alkaloid biosynthesis. Functionally, may be involved in the biosynthesis of caffeine. The polypeptide is Probable caffeine synthase 5 (Camellia sinensis (Tea plant)).